The following is an 802-amino-acid chain: Valine--tRNA ligase (802 aa).

A 'HIGH' region motif is present at residues 45 to 55 (PTISGQLHIGH). A 'KMSKS' region motif is present at residues 524 to 528 (KMSKS). Lys527 contributes to the ATP binding site.

This sequence belongs to the class-I aminoacyl-tRNA synthetase family. ValS type 2 subfamily. In terms of assembly, monomer.

It localises to the cytoplasm. It carries out the reaction tRNA(Val) + L-valine + ATP = L-valyl-tRNA(Val) + AMP + diphosphate. Its function is as follows. Catalyzes the attachment of valine to tRNA(Val). As ValRS can inadvertently accommodate and process structurally similar amino acids such as threonine, to avoid such errors, it has a 'posttransfer' editing activity that hydrolyzes mischarged Thr-tRNA(Val) in a tRNA-dependent manner. The sequence is that of Valine--tRNA ligase from Ehrlichia canis (strain Jake).